The chain runs to 407 residues: Proteasome-activating nucleotidase (407 aa).

Residues 22-67 (KEKAYLAELESKVLRLELKNKDITRENVQIKKENEILKRELDKLRI) adopt a coiled-coil conformation. ATP is bound by residues 192–197 (GTGKTL) and His-331. Positions 405–407 (MYG) are docks into pockets in the proteasome alpha-ring to cause gate opening.

This sequence belongs to the AAA ATPase family. In terms of assembly, homohexamer. The hexameric complex has a two-ring architecture resembling a top hat that caps the 20S proteasome core at one or both ends. Upon ATP-binding, the C-terminus of PAN interacts with the alpha-rings of the proteasome core by binding to the intersubunit pockets.

The protein localises to the cytoplasm. Its function is as follows. ATPase which is responsible for recognizing, binding, unfolding and translocation of substrate proteins into the archaeal 20S proteasome core particle. Is essential for opening the gate of the 20S proteasome via an interaction with its C-terminus, thereby allowing substrate entry and access to the site of proteolysis. Thus, the C-termini of the proteasomal ATPase function like a 'key in a lock' to induce gate opening and therefore regulate proteolysis. Unfolding activity requires energy from ATP hydrolysis, whereas ATP binding alone promotes ATPase-20S proteasome association which triggers gate opening, and supports translocation of unfolded substrates. The sequence is that of Proteasome-activating nucleotidase from Methanococcus vannielii (strain ATCC 35089 / DSM 1224 / JCM 13029 / OCM 148 / SB).